Here is a 191-residue protein sequence, read N- to C-terminus: Thymidine kinase (191 aa).

Residues 15–22 (GPMYSGKT) and 88–91 (DEAQ) each bind ATP. Residue E89 is the Proton acceptor of the active site. Zn(2+) contacts are provided by C145, C148, C183, and C186.

The protein belongs to the thymidine kinase family. Homotetramer.

The protein localises to the cytoplasm. The catalysed reaction is thymidine + ATP = dTMP + ADP + H(+). The sequence is that of Thymidine kinase from Clostridium botulinum (strain Hall / ATCC 3502 / NCTC 13319 / Type A).